The chain runs to 310 residues: tRNA dimethylallyltransferase (310 aa).

Position 14 to 21 (14 to 21 (GPTASGKS)) interacts with ATP. Substrate is bound at residue 16–21 (TASGKS). Interaction with substrate tRNA stretches follow at residues 39–42 (DSMQ) and 163–167 (QRIVR).

It belongs to the IPP transferase family. In terms of assembly, monomer. Mg(2+) is required as a cofactor.

The enzyme catalyses adenosine(37) in tRNA + dimethylallyl diphosphate = N(6)-dimethylallyladenosine(37) in tRNA + diphosphate. Functionally, catalyzes the transfer of a dimethylallyl group onto the adenine at position 37 in tRNAs that read codons beginning with uridine, leading to the formation of N6-(dimethylallyl)adenosine (i(6)A). The sequence is that of tRNA dimethylallyltransferase from Brucella suis biovar 1 (strain 1330).